A 466-amino-acid chain; its full sequence is MSDLRVRFAPSPTGYLHVGGARTALFNWLYARHFGGTFILRIEDTDTERSTQQSVDAILQGMEWLGLDWDEGPFYQTDNFPLYKQHVQKLLDEGKAYRCWCRPEELEAKREAAMAEGRKPKYDGTCRHRQDQPLDQPHVIRFKAPEEGETAFDDLIKGRIAFPNAELDDLIISRTDGTPTYNFCVVIDDALMRISHVIRGDDHVNNTPRQIQLYEALGYPVPIFAHVPMILGSDKARLSKRHGATSVIAYRDMGYLPEALNNYLVRLGWSNGDDEIFSREEMVQKFDIANVGRSPSVFNPDKLNWLNAHYIKTGNPARLAELLQPHLAGRGVADCSTPDLAGVISTLQERAQTLEEMAERALFYYQAPQQYDEAALSKFDKPHLAAVFSAVAARLSATTAAAAPEFDTLLKEICAEGGWKMPHVGQPLRIALSGSTQAPGIGEIITALGVNETIARIERAREFLAH.

Residues Pro-10–Gly-20 carry the 'HIGH' region motif. Residues Cys-99, Cys-101, Cys-126, and His-128 each coordinate Zn(2+). The 'KMSKS' region signature appears at Arg-237–Arg-241. Position 240 (Lys-240) interacts with ATP.

This sequence belongs to the class-I aminoacyl-tRNA synthetase family. Glutamate--tRNA ligase type 1 subfamily. In terms of assembly, monomer. The cofactor is Zn(2+).

It localises to the cytoplasm. The catalysed reaction is tRNA(Glu) + L-glutamate + ATP = L-glutamyl-tRNA(Glu) + AMP + diphosphate. Functionally, catalyzes the attachment of glutamate to tRNA(Glu) in a two-step reaction: glutamate is first activated by ATP to form Glu-AMP and then transferred to the acceptor end of tRNA(Glu). The protein is Glutamate--tRNA ligase of Trichlorobacter lovleyi (strain ATCC BAA-1151 / DSM 17278 / SZ) (Geobacter lovleyi).